Here is a 241-residue protein sequence, read N- to C-terminus: Small ribosomal subunit protein uS3 (241 aa).

A KH type-2 domain is found at 39–108; that stretch reads IREGVLKLLK…NLKVEVKVIE (70 aa). Positions 215–241 are disordered; it reads SQRVSEKAPMNNDRRFNNKNNNRGGRK. Positions 232–241 are enriched in low complexity; it reads NKNNNRGGRK.

Belongs to the universal ribosomal protein uS3 family. Part of the 30S ribosomal subunit. Forms a tight complex with proteins S10 and S14.

Binds the lower part of the 30S subunit head. Binds mRNA in the 70S ribosome, positioning it for translation. In Mesoplasma florum (strain ATCC 33453 / NBRC 100688 / NCTC 11704 / L1) (Acholeplasma florum), this protein is Small ribosomal subunit protein uS3.